A 409-amino-acid chain; its full sequence is Astacin-like metalloendopeptidase (409 aa).

The signal sequence occupies residues 1–19; sequence MDLKMLLIFIAFLLPSVLG. The segment covering 30-39 has biased composition (low complexity); sequence TATTESTQVT. Positions 30-54 are disordered; it reads TATTESTQVTTEEDIYDSPSPAETD. Residues 87–285 enclose the Peptidase M12A domain; the sequence is SAINCRNCYW…AKINRLYNCS (199 aa). Intrachain disulfides connect Cys-91–Cys-94, Cys-134–Cys-284, Cys-155–Cys-175, Cys-287–Cys-313, and Cys-339–Cys-362. His-183 is a binding site for Zn(2+). Residue Glu-184 is part of the active site. Positions 187 and 193 each coordinate Zn(2+). Residues 287–399 form the CUB domain; sequence CSTIIDAAFG…SGFQATFTSA (113 aa).

Zn(2+) serves as cofactor. In terms of tissue distribution, expressed in ovary and gonads.

It is found in the cytoplasm. The protein resides in the cell membrane. The protein localises to the cytoplasmic vesicle. It localises to the secretory vesicle. Its subcellular location is the cortical granule. Functionally, probable oocyte-specific oolemmal receptor involved in sperm and egg adhesion and fertilization. May act as a protease. The sequence is that of Astacin-like metalloendopeptidase (ASTL) from Gallus gallus (Chicken).